Reading from the N-terminus, the 791-residue chain is Ataxin-2 homolog (791 aa).

Residues 1–22 (MATRSVSMKQTSQRAASPNKTQ) show a composition bias toward polar residues. Disordered regions lie at residues 1–28 (MATR…KKWS), 60–100 (RGGV…QQRV), 112–134 (RTET…GVPL), 235–311 (TRSN…KEGQ), 326–423 (SLDS…TKLG), 452–505 (KPAP…PVSS), 613–634 (NPSQ…GNSS), and 707–791 (PMYG…EAKP). The span at 76–96 (SLASSEENVSSVSGSAKSNNS) shows a compositional bias: low complexity. 2 stretches are compositionally biased toward basic and acidic residues: residues 112-125 (RTET…RWMP) and 243-256 (NNKD…EAPH). Over residues 326–337 (SLDSKQPSSTKS) the composition is skewed to polar residues. 2 stretches are compositionally biased toward basic and acidic residues: residues 360–371 (DSKEPRKEEAEK) and 395–418 (SKEE…KETT). Over residues 473 to 486 (SIPSTTPQSPSVVS) the composition is skewed to low complexity. Positions 487–497 (NGENKPSSSPV) are enriched in polar residues. Low complexity-rich tracts occupy residues 715 to 725 (SNSQRSFNSSN) and 734 to 760 (NNNA…NTTA). Residues 774 to 791 (DATEKTEKDASANQEAKP) show a composition bias toward basic and acidic residues.

The protein belongs to the ataxin-2 family. Interacts with mkt1.

It localises to the cytoplasm. Involved in post-transcriptional regulation of gene expression, probably by association with mkt1. The polypeptide is Ataxin-2 homolog (Schizosaccharomyces pombe (strain 972 / ATCC 24843) (Fission yeast)).